Consider the following 579-residue polypeptide: Protein alan shepard (579 aa).

Residues 1–12 (MHPRYSPAPPPQ) are compositionally biased toward pro residues. A disordered region spans residues 1 to 66 (MHPRYSPAPP…GSSSSAAAAP (66 aa)). At Tyr5 the chain carries Phosphotyrosine. A compositionally biased stretch (low complexity) spans 13 to 24 (QQQQMGGPPHQQ). Residues 25–35 (QGGGGGGGGSM) are compositionally biased toward gly residues. Over residues 37–54 (GPSNAQQLPPQIPRSQNY) the composition is skewed to polar residues. The span at 55–66 (SNGSSSSAAAAP) shows a compositional bias: low complexity. Phosphotyrosine is present on residues Tyr125 and Tyr142. The segment at 164–225 (PATTTYGQRV…TVQNQNQQGG (62 aa)) is disordered. The segment covering 178 to 225 (SPSNTNSSSSSNTGSQSGTLSTSLSNTTNTNTNMGPNGTVQNQNQQGG) has biased composition (low complexity). 2 consecutive RRM domains span residues 231-304 (TNLY…MAKQ) and 310-389 (TNLY…FADG). Residues 553 to 579 (MTDSEQASTAASPDEAYTQYPHQAAPK) are disordered.

Functionally, has a role in the perception of gravity. This chain is Protein alan shepard, found in Drosophila sechellia (Fruit fly).